Reading from the N-terminus, the 314-residue chain is Pantothenate kinase (314 aa).

ATP is bound at residue 93–100 (GSVAVGKS).

It belongs to the prokaryotic pantothenate kinase family.

It is found in the cytoplasm. It catalyses the reaction (R)-pantothenate + ATP = (R)-4'-phosphopantothenate + ADP + H(+). The protein operates within cofactor biosynthesis; coenzyme A biosynthesis; CoA from (R)-pantothenate: step 1/5. In Shewanella denitrificans (strain OS217 / ATCC BAA-1090 / DSM 15013), this protein is Pantothenate kinase.